Reading from the N-terminus, the 983-residue chain is Glycine dehydrogenase (decarboxylating) (983 aa).

The residue at position 731 (K731) is an N6-(pyridoxal phosphate)lysine.

Belongs to the GcvP family. As to quaternary structure, the glycine cleavage system is composed of four proteins: P, T, L and H. Pyridoxal 5'-phosphate is required as a cofactor.

The enzyme catalyses N(6)-[(R)-lipoyl]-L-lysyl-[glycine-cleavage complex H protein] + glycine + H(+) = N(6)-[(R)-S(8)-aminomethyldihydrolipoyl]-L-lysyl-[glycine-cleavage complex H protein] + CO2. Functionally, the glycine cleavage system catalyzes the degradation of glycine. The P protein binds the alpha-amino group of glycine through its pyridoxal phosphate cofactor; CO(2) is released and the remaining methylamine moiety is then transferred to the lipoamide cofactor of the H protein. The sequence is that of Glycine dehydrogenase (decarboxylating) from Nostoc sp. (strain PCC 7120 / SAG 25.82 / UTEX 2576).